Consider the following 404-residue polypeptide: NADH-quinone oxidoreductase subunit D 2 (404 aa).

The protein belongs to the complex I 49 kDa subunit family. As to quaternary structure, NDH-1 is composed of 14 different subunits. Subunits NuoB, C, D, E, F, and G constitute the peripheral sector of the complex.

It localises to the cell inner membrane. It catalyses the reaction a quinone + NADH + 5 H(+)(in) = a quinol + NAD(+) + 4 H(+)(out). NDH-1 shuttles electrons from NADH, via FMN and iron-sulfur (Fe-S) centers, to quinones in the respiratory chain. The immediate electron acceptor for the enzyme in this species is believed to be ubiquinone. Couples the redox reaction to proton translocation (for every two electrons transferred, four hydrogen ions are translocated across the cytoplasmic membrane), and thus conserves the redox energy in a proton gradient. This Rhizobium etli (strain CIAT 652) protein is NADH-quinone oxidoreductase subunit D 2.